The sequence spans 785 residues: Conserved oligomeric Golgi complex subunit 4 (785 aa).

Residues 1–24 (MADLDSPPKLSGVQQPSEGVGGGR) are disordered. Position 2 is an N-acetylalanine (Ala-2). The segment at 2–84 (ADLDSPPKLS…VTLHRMGPNL (83 aa)) is interaction with SCFD1. Ser-6 carries the post-translational modification Phosphoserine. The tract at residues 85–153 (QLIEGDAKQL…TALRSEDYEQ (69 aa)) is interaction with STX5. The tract at residues 618–740 (PQVQPWINSF…SQMATILNLE (123 aa)) is d domain. The interval 741 to 785 (RVTEILDYWGPNSGPLTWRLTPAEVRQVLALRIDFRSEDIKRLRL) is e domain; essential for proper cell surface glycosylation.

This sequence belongs to the COG4 family. In terms of assembly, monomer. Component of the conserved oligomeric Golgi (COG) complex which is composed of eight different subunits and is required for normal Golgi morphology and localization. Mediates interaction of SCFD1 with the COG complex. Interacts with STX5.

It localises to the cytoplasm. The protein localises to the cytosol. It is found in the golgi apparatus membrane. Required for normal Golgi function. Plays a role in SNARE-pin assembly and Golgi-to-ER retrograde transport via its interaction with SCFD1. The protein is Conserved oligomeric Golgi complex subunit 4 (COG4) of Homo sapiens (Human).